A 287-amino-acid chain; its full sequence is 33 kDa chaperonin (287 aa).

Disulfide bonds link Cys-233–Cys-235 and Cys-266–Cys-269.

This sequence belongs to the HSP33 family. In terms of processing, under oxidizing conditions two disulfide bonds are formed involving the reactive cysteines. Under reducing conditions zinc is bound to the reactive cysteines and the protein is inactive.

The protein localises to the cytoplasm. Its function is as follows. Redox regulated molecular chaperone. Protects both thermally unfolding and oxidatively damaged proteins from irreversible aggregation. Plays an important role in the bacterial defense system toward oxidative stress. This chain is 33 kDa chaperonin, found in Thermodesulfovibrio yellowstonii (strain ATCC 51303 / DSM 11347 / YP87).